A 643-amino-acid chain; its full sequence is Phosphomethylpyrimidine synthase (643 aa).

Substrate contacts are provided by residues Asn-248, Met-277, Tyr-306, His-342, 362–364, 403–406, and Glu-442; these read SRG and DGLR. His-446 contacts Zn(2+). Tyr-469 contributes to the substrate binding site. His-510 contacts Zn(2+). Residues Cys-590, Cys-593, and Cys-598 each contribute to the [4Fe-4S] cluster site.

It belongs to the ThiC family. Homodimer. It depends on [4Fe-4S] cluster as a cofactor.

The catalysed reaction is 5-amino-1-(5-phospho-beta-D-ribosyl)imidazole + S-adenosyl-L-methionine = 4-amino-2-methyl-5-(phosphooxymethyl)pyrimidine + CO + 5'-deoxyadenosine + formate + L-methionine + 3 H(+). Its pathway is cofactor biosynthesis; thiamine diphosphate biosynthesis. Functionally, catalyzes the synthesis of the hydroxymethylpyrimidine phosphate (HMP-P) moiety of thiamine from aminoimidazole ribotide (AIR) in a radical S-adenosyl-L-methionine (SAM)-dependent reaction. The protein is Phosphomethylpyrimidine synthase of Burkholderia multivorans (strain ATCC 17616 / 249).